The sequence spans 24 residues: Outer membrane protein (24 aa).

This sequence belongs to the Gram-negative porin family. Homotrimer.

The protein resides in the cell outer membrane. Functionally, forms pores that allow passive diffusion of small molecules across the outer membrane. This is Outer membrane protein from Sodalis glossinidius.